The sequence spans 454 residues: Phosphoglucosamine mutase (454 aa).

Catalysis depends on S104, which acts as the Phosphoserine intermediate. Residues S104, D244, D246, and D248 each contribute to the Mg(2+) site. A Phosphoserine modification is found at S104.

This sequence belongs to the phosphohexose mutase family. Mg(2+) is required as a cofactor. Activated by phosphorylation.

It catalyses the reaction alpha-D-glucosamine 1-phosphate = D-glucosamine 6-phosphate. Catalyzes the conversion of glucosamine-6-phosphate to glucosamine-1-phosphate. The chain is Phosphoglucosamine mutase from Lacticaseibacillus paracasei (strain ATCC 334 / BCRC 17002 / CCUG 31169 / CIP 107868 / KCTC 3260 / NRRL B-441) (Lactobacillus paracasei).